Here is a 153-residue protein sequence, read N- to C-terminus: 6,7-dimethyl-8-ribityllumazine synthase 1 (153 aa).

Residues Phe16, 47 to 49 (ALE), and 76 to 78 (MVI) each bind 5-amino-6-(D-ribitylamino)uracil. 81 to 82 (ET) is a binding site for (2S)-2-hydroxy-3-oxobutyl phosphate. Catalysis depends on His84, which acts as the Proton donor. Asn109 contacts 5-amino-6-(D-ribitylamino)uracil. Arg123 provides a ligand contact to (2S)-2-hydroxy-3-oxobutyl phosphate.

It belongs to the DMRL synthase family.

The enzyme catalyses (2S)-2-hydroxy-3-oxobutyl phosphate + 5-amino-6-(D-ribitylamino)uracil = 6,7-dimethyl-8-(1-D-ribityl)lumazine + phosphate + 2 H2O + H(+). Its pathway is cofactor biosynthesis; riboflavin biosynthesis; riboflavin from 2-hydroxy-3-oxobutyl phosphate and 5-amino-6-(D-ribitylamino)uracil: step 1/2. Catalyzes the formation of 6,7-dimethyl-8-ribityllumazine by condensation of 5-amino-6-(D-ribitylamino)uracil with 3,4-dihydroxy-2-butanone 4-phosphate. This is the penultimate step in the biosynthesis of riboflavin. This Rhizobium meliloti (strain 1021) (Ensifer meliloti) protein is 6,7-dimethyl-8-ribityllumazine synthase 1.